The sequence spans 116 residues: Phosphoribosyl-AMP cyclohydrolase (116 aa).

Aspartate 82 is a binding site for Mg(2+). Cysteine 83 is a Zn(2+) binding site. 2 residues coordinate Mg(2+): aspartate 84 and aspartate 86. Cysteine 99 and cysteine 106 together coordinate Zn(2+).

The protein belongs to the PRA-CH family. Homodimer. It depends on Mg(2+) as a cofactor. Zn(2+) serves as cofactor.

The protein resides in the cytoplasm. It carries out the reaction 1-(5-phospho-beta-D-ribosyl)-5'-AMP + H2O = 1-(5-phospho-beta-D-ribosyl)-5-[(5-phospho-beta-D-ribosylamino)methylideneamino]imidazole-4-carboxamide. It functions in the pathway amino-acid biosynthesis; L-histidine biosynthesis; L-histidine from 5-phospho-alpha-D-ribose 1-diphosphate: step 3/9. Functionally, catalyzes the hydrolysis of the adenine ring of phosphoribosyl-AMP. The polypeptide is Phosphoribosyl-AMP cyclohydrolase (Saccharopolyspora erythraea (strain ATCC 11635 / DSM 40517 / JCM 4748 / NBRC 13426 / NCIMB 8594 / NRRL 2338)).